The primary structure comprises 377 residues: tRNA(Met) cytidine acetate ligase (377 aa).

ATP contacts are provided by residues 7-20 (ITEYNPFHNGHLYH), Gly-101, Asn-152, and Arg-179.

It belongs to the TmcAL family.

Its subcellular location is the cytoplasm. It catalyses the reaction cytidine(34) in elongator tRNA(Met) + acetate + ATP = N(4)-acetylcytidine(34) in elongator tRNA(Met) + AMP + diphosphate. In terms of biological role, catalyzes the formation of N(4)-acetylcytidine (ac(4)C) at the wobble position of elongator tRNA(Met), using acetate and ATP as substrates. First activates an acetate ion to form acetyladenylate (Ac-AMP) and then transfers the acetyl group to tRNA to form ac(4)C34. The polypeptide is tRNA(Met) cytidine acetate ligase (Oenococcus oeni (strain ATCC BAA-331 / PSU-1)).